The sequence spans 148 residues: Receptor activity-modifying protein 1 (148 aa).

The N-terminal stretch at 1–26 (MVRVLRGLPWRGLWLLLAHQLFLVTA) is a signal peptide. Disulfide bonds link Cys27–Cys82, Cys40–Cys72, and Cys57–Cys104. Residues 27-118 (CQDAHYGTLM…RALGDPPSTI (92 aa)) are Extracellular-facing. Residues 119 to 140 (LCPFVVLPITVTLLVTALVVWR) traverse the membrane as a helical segment. Topologically, residues 141–148 (SKRAESIV) are cytoplasmic.

Belongs to the RAMP family. In terms of assembly, heterodimer of CALCRL and RAMP1; the interaction induces allosteric modulation of CALCRL function and CGRP1/CALCA and CGRP2/CALCB ligand specificity. Heterodimer of CALCR and RAMP1; interaction forms the AMYR1 receptor complex for amylin/IAPP and CGRP1/CALCA ligands.

It localises to the cell membrane. In terms of biological role, accessory protein that interacts with and modulates the function of G-protein coupled receptors including calcitonin gene-related peptide type 1 receptor (CALCRL) and calcitonin receptor (CALCR). Required for the transport of CALCRL to the plasma membrane. Together with CALCRL, form the receptor complex for the calcitonin gene-related peptides CGRP1/CALCA and CGRP2/CALCB. Together with CALCR, form the AMYR1 receptor complex for amylin/IAPP and CGRP1/CALCA. The chain is Receptor activity-modifying protein 1 (RAMP1) from Cavia porcellus (Guinea pig).